A 153-amino-acid chain; its full sequence is Superoxide dismutase [Cu-Zn] (153 aa).

Residues histidine 46, histidine 48, and histidine 63 each contribute to the Cu cation site. Cysteines 57 and 146 form a disulfide. Residues histidine 63, histidine 71, histidine 80, and aspartate 83 each coordinate Zn(2+). Cu cation is bound at residue histidine 120.

It belongs to the Cu-Zn superoxide dismutase family. As to quaternary structure, homodimer. The cofactor is Cu cation. Requires Zn(2+) as cofactor.

The protein resides in the cytoplasm. The catalysed reaction is 2 superoxide + 2 H(+) = H2O2 + O2. Destroys radicals which are normally produced within the cells and which are toxic to biological systems. In Solidago canadensis var. scabra (Tall goldenrod), this protein is Superoxide dismutase [Cu-Zn] (SODCC).